Consider the following 156-residue polypeptide: Endogenous retrovirus group K member 18 Pro protein (156 aa).

Residues 21–96 form the Peptidase A2 domain; sequence LEGLVDTGAD…IPLNLWGRDL (76 aa). Aspartate 26 is a catalytic residue. The 46-residue stretch at 111 to 156 folds into the G-patch domain; the sequence is YSPMSQKIMTKMGYIPGKGLGKNEDGIKVPIEAKINHGREGTGYPF.

It belongs to the peptidase A2 family. HERV class-II K(HML-2) subfamily. As to quaternary structure, active as a homodimer. In terms of processing, autoproteolytically processed at the N-terminus. Expected C-terminal autoprocessing not detected. The sequence shown is that of the processed Pro protein.

It catalyses the reaction Processing at the authentic HIV-1 PR recognition site and release of the mature p17 matrix and the p24 capsid protein, as a result of the cleavage of the -SQNY-|-PIVQ- cleavage site.. Its function is as follows. Retroviral proteases have roles in the processing of the primary translation products and the maturation of the viral particle. Endogenous Pro proteins may have kept, lost or modified their original function during evolution. In Homo sapiens (Human), this protein is Endogenous retrovirus group K member 18 Pro protein (ERVK-18).